The primary structure comprises 162 residues: Putative ethylene-responsive transcription factor ERF121 (162 aa).

3 disordered regions span residues 1–21, 84–103, and 139–162; these read MDYSENVQNKNFTPISQPPNL, IKQEKKHKGVRKKPSGKWSA, and KRSARRGSKKGEGSIHQEVGGGDD. Over residues 87-98 the composition is skewed to basic residues; that stretch reads EKKHKGVRKKPS. Residues 89-146 constitute a DNA-binding region (AP2/ERF); the sequence is KHKGVRKKPSGKWSAEIWDPSTRTRRWLGTFPTAEMAADAYDEAAAALVEKRSARRGS.

The protein belongs to the AP2/ERF transcription factor family. ERF subfamily.

Its subcellular location is the nucleus. Its function is as follows. Probably acts as a transcriptional activator. Binds to the GCC-box pathogenesis-related promoter element. May be involved in the regulation of gene expression by stress factors and by components of stress signal transduction pathways. The protein is Putative ethylene-responsive transcription factor ERF121 (ERF121) of Arabidopsis thaliana (Mouse-ear cress).